The sequence spans 217 residues: Small ribosomal subunit protein uS3 (217 aa).

Residues 38–106 form the KH type-2 domain; sequence IRKYIDNALQ…KVHINVIEIK (69 aa).

Belongs to the universal ribosomal protein uS3 family. Part of the 30S ribosomal subunit. Forms a tight complex with proteins S10 and S14.

Functionally, binds the lower part of the 30S subunit head. Binds mRNA in the 70S ribosome, positioning it for translation. In Staphylococcus saprophyticus subsp. saprophyticus (strain ATCC 15305 / DSM 20229 / NCIMB 8711 / NCTC 7292 / S-41), this protein is Small ribosomal subunit protein uS3.